The chain runs to 336 residues: Alpha-N-acetylgalactosaminide alpha-2,6-sialyltransferase 5 (336 aa).

Residues 1-8 (MKTLMRHG) lie on the Cytoplasmic side of the membrane. A helical; Signal-anchor for type II membrane protein transmembrane segment spans residues 9–29 (LAVCLALTTMCTSLLLVYSSL). Residues 30–336 (GGQKERPPQQ…INHPENKPVF (307 aa)) lie on the Lumenal side of the membrane. Residues 32–81 (QKERPPQQQQQQQQQQQQASATGSSQPAAESSTQQRPGVPAGPRPLDGYL) are disordered. Over residues 38–49 (QQQQQQQQQQQQ) the composition is skewed to low complexity. A compositionally biased stretch (polar residues) spans 50 to 67 (ASATGSSQPAAESSTQQR). Cys-96 and Cys-245 are oxidised to a cystine. N-linked (GlcNAc...) asparagine glycans are attached at residues Asn-137 and Asn-161.

The protein belongs to the glycosyltransferase 29 family.

It localises to the golgi apparatus membrane. It carries out the reaction a ganglioside GM1b (d18:1(4E)) + CMP-N-acetyl-beta-neuraminate = a ganglioside GD1alpha (d18:1(4E)) + CMP + H(+). It catalyses the reaction N-acetyl-alpha-neuraminosyl-(2-&gt;3)-beta-D-galactosyl-(1-&gt;3)-N-acetyl-beta-D-glucosaminyl-(1-&gt;3)-beta-D-galactosyl-(1-&gt;4)-beta-D-glucosyl-(1&lt;-&gt;1')-N-acyl-sphing-4-enine + CMP-N-acetyl-beta-neuraminate = N-acetyl-alpha-neuraminosyl-(2-&gt;3)-beta-D-galactosyl-(1-&gt;3)-[N-acetyl-alpha-neuraminosyl-(2-&gt;6)]-N-acetyl-beta-D-glucosaminyl-(1-&gt;3)-beta-D-galactosyl-(1-&gt;4)-beta-D-glucosyl-(1&lt;-&gt;1')-N-acyl-sphing-4-enine + CMP + H(+). It participates in glycolipid biosynthesis. Its function is as follows. Predominantly catalyzes the biosynthesis of ganglioside GD1alpha from GM1b in the brain, by transferring the sialyl group (N-acetyl-alpha-neuraminyl or NeuAc) from CMP-NeuAc to the GalNAc residue on the NeuAc-alpha-2,3-Gal-beta-1,3-GalNAc sequence of GM1b. GD1alpha is a critical molecule in the communication and interaction between neuronal cells and their supportive cells, particularly in brain tissues, and functions as an adhesion molecule in the process of metastasis. Also shows activity towards sialyl Lc4Cer (N-acetyl-alpha-neuraminosyl-(2-&gt;3)-beta-D-galactosyl-(1-&gt;3)-N-acetyl-beta-D-glucosaminyl-(1-&gt;3)-beta-D-galactosyl-(1-&gt;4)-beta-D-glucosyl-(1&lt;-&gt;1')-N-acyl-sphing-4-enine) generating disialyl Lc4Cer, which can lead to the synthesis of disialyl Lewis a (Le(a)), suggested to be a cancer-associated antigen. In Homo sapiens (Human), this protein is Alpha-N-acetylgalactosaminide alpha-2,6-sialyltransferase 5 (ST6GALNAC5).